The following is a 248-amino-acid chain: Isoprenyl transferase (248 aa).

The active site involves D23. D23 provides a ligand contact to Mg(2+). Substrate contacts are provided by residues G24–R27, W28, R36, H40, and S68–E70. Residue N71 is the Proton acceptor of the active site. Residues W72, R74, R185, and R191 to S193 contribute to the substrate site. E204 is a Mg(2+) binding site.

It belongs to the UPP synthase family. Homodimer. The cofactor is Mg(2+).

Its function is as follows. Catalyzes the condensation of isopentenyl diphosphate (IPP) with allylic pyrophosphates generating different type of terpenoids. The protein is Isoprenyl transferase of Neisseria meningitidis serogroup B (strain ATCC BAA-335 / MC58).